An 895-amino-acid polypeptide reads, in one-letter code: Serine-rich coiled-coil domain-containing protein 1 (895 aa).

4 disordered regions span residues 1 to 142, 154 to 177, 332 to 394, and 459 to 497; these read MGDS…KEPS, SGRS…KQST, ELHS…RTLG, and RSSS…SSKM. The span at 43–56 shows a compositional bias: low complexity; the sequence is SSSPSSTNSSSGST. Positions 83–102 are enriched in polar residues; the sequence is TEQNLSISNGAQPSHSNMQK. Positions 131–142 are enriched in basic and acidic residues; the sequence is LTEDFEREKEPS. Residues 348–358 show a composition bias toward polar residues; the sequence is SLQSTELSVGN. The stretch at 675–705 forms a coiled coil; sequence MLRLQLKDRDELISQLQAELEKVQHLQKAFA. The tract at residues 731–753 is disordered; sequence QGGRETTHRNRTMSQSHSTRDRK.

This sequence belongs to the CCSER family.

In Mus musculus (Mouse), this protein is Serine-rich coiled-coil domain-containing protein 1 (Ccser1).